Consider the following 317-residue polypeptide: Protoheme IX farnesyltransferase (317 aa).

The next 8 membrane-spanning stretches (helical) occupy residues 25–45, 54–74, 126–146, 154–174, 181–201, 227–244, 249–271, and 281–301; these read FFAL…LVGM, PVIA…SGCL, LAAG…SMWL, IVIG…VVTG, LVLF…LALV, IVAY…PVAL, LIYG…QVYH, and AAMG…SALL.

The protein belongs to the UbiA prenyltransferase family. Protoheme IX farnesyltransferase subfamily.

The protein localises to the cell inner membrane. It catalyses the reaction heme b + (2E,6E)-farnesyl diphosphate + H2O = Fe(II)-heme o + diphosphate. It participates in porphyrin-containing compound metabolism; heme O biosynthesis; heme O from protoheme: step 1/1. In terms of biological role, converts heme B (protoheme IX) to heme O by substitution of the vinyl group on carbon 2 of heme B porphyrin ring with a hydroxyethyl farnesyl side group. The polypeptide is Protoheme IX farnesyltransferase (Methylobacterium sp. (strain 4-46)).